A 342-amino-acid polypeptide reads, in one-letter code: 4-hydroxy-2-oxovalerate aldolase 2 (342 aa).

Positions isoleucine 8–glutamine 260 constitute a Pyruvate carboxyltransferase domain. A substrate-binding site is contributed by arginine 16–aspartate 17. Residue aspartate 17 participates in Mn(2+) binding. Histidine 20 serves as the catalytic Proton acceptor. Residues serine 170 and histidine 199 each coordinate substrate. Mn(2+) is bound by residues histidine 199 and histidine 201. Tyrosine 290 is a substrate binding site.

It belongs to the 4-hydroxy-2-oxovalerate aldolase family.

It catalyses the reaction (S)-4-hydroxy-2-oxopentanoate = acetaldehyde + pyruvate. The chain is 4-hydroxy-2-oxovalerate aldolase 2 (mhpE) from Azoarcus sp. (strain BH72).